The following is a 207-amino-acid chain: Outer-membrane lipoprotein LolB (207 aa).

A signal peptide spans 1–21 (MPLPDFRLIRLLPLAALVLTA). Cys22 carries N-palmitoyl cysteine lipidation. Cys22 carries the S-diacylglycerol cysteine lipid modification.

The protein belongs to the LolB family. As to quaternary structure, monomer.

The protein localises to the cell outer membrane. Its function is as follows. Plays a critical role in the incorporation of lipoproteins in the outer membrane after they are released by the LolA protein. The chain is Outer-membrane lipoprotein LolB from Escherichia coli O7:K1 (strain IAI39 / ExPEC).